Consider the following 89-residue polypeptide: Ubiquinol-cytochrome-c reductase complex assembly factor 3 (89 aa).

Residues 1-7 lie on the Mitochondrial matrix side of the membrane; the sequence is MEVARKA. A helical transmembrane segment spans residues 8–28; that stretch reads LVAVAVLGGGAGVGSILFALV. Positions 23–80 are mediates lipid-binding; sequence ILFALVTPGELQKQSMLQEMPERDSRRRDEAVRTTELVMATLKDAAATKENVAWRRNW. Residues 29–89 are Mitochondrial intermembrane-facing; the sequence is TPGELQKQSM…WTVSGDGRSA (61 aa).

The protein belongs to the UQCC3 family. In terms of assembly, associates with the ubiquinol-cytochrome c reductase complex (mitochondrial respiratory chain complex III(CIII) or cytochrome b-c1 complex). Interacts with UQCC1. Forms a complex, named COMC, composed of UQCC1, UQCC2; UQCC3 and UQCC4; mediates MT-CYB hemylation and association with the first nuclear-encoded complex III subunit UQCRQ. Probably cleaved by OMA1 under mitochondrial stress conditions.

Its subcellular location is the mitochondrion inner membrane. In terms of biological role, required for the assembly of the ubiquinol-cytochrome c reductase complex (mitochondrial respiratory chain complex III or cytochrome b-c1 complex), mediating cytochrome b recruitment and probably stabilization within the complex. Thereby, plays an important role in ATP production by mitochondria. Cardiolipin-binding protein, it may also control the cardiolipin composition of mitochondria membranes and their morphology. The sequence is that of Ubiquinol-cytochrome-c reductase complex assembly factor 3 from Mus musculus (Mouse).